A 323-amino-acid polypeptide reads, in one-letter code: tRNA dimethylallyltransferase (323 aa).

Residue 32–39 (GPTASGKS) coordinates ATP. A substrate-binding site is contributed by 34 to 39 (TASGKS). Residues 57 to 60 (DSMQ) form an interaction with substrate tRNA region.

This sequence belongs to the IPP transferase family. In terms of assembly, monomer. Mg(2+) is required as a cofactor.

The catalysed reaction is adenosine(37) in tRNA + dimethylallyl diphosphate = N(6)-dimethylallyladenosine(37) in tRNA + diphosphate. Catalyzes the transfer of a dimethylallyl group onto the adenine at position 37 in tRNAs that read codons beginning with uridine, leading to the formation of N6-(dimethylallyl)adenosine (i(6)A). The sequence is that of tRNA dimethylallyltransferase from Rhodopseudomonas palustris (strain BisB5).